A 485-amino-acid polypeptide reads, in one-letter code: Probable phosphomannomutase (485 aa).

Ser86 (phosphoserine intermediate) is an active-site residue. The Mg(2+) site is built by Ser86, Asp236, Asp238, and Asp240.

It belongs to the phosphohexose mutase family. Mg(2+) serves as cofactor.

It carries out the reaction alpha-D-mannose 1-phosphate = D-mannose 6-phosphate. The chain is Probable phosphomannomutase from Haemophilus influenzae (strain ATCC 51907 / DSM 11121 / KW20 / Rd).